Reading from the N-terminus, the 556-residue chain is 2-succinyl-5-enolpyruvyl-6-hydroxy-3-cyclohexene-1-carboxylate synthase (556 aa).

This sequence belongs to the TPP enzyme family. MenD subfamily. In terms of assembly, homodimer. It depends on Mg(2+) as a cofactor. The cofactor is Mn(2+). Requires thiamine diphosphate as cofactor.

It carries out the reaction isochorismate + 2-oxoglutarate + H(+) = 5-enolpyruvoyl-6-hydroxy-2-succinyl-cyclohex-3-ene-1-carboxylate + CO2. Its pathway is quinol/quinone metabolism; 1,4-dihydroxy-2-naphthoate biosynthesis; 1,4-dihydroxy-2-naphthoate from chorismate: step 2/7. It participates in quinol/quinone metabolism; menaquinone biosynthesis. Functionally, catalyzes the thiamine diphosphate-dependent decarboxylation of 2-oxoglutarate and the subsequent addition of the resulting succinic semialdehyde-thiamine pyrophosphate anion to isochorismate to yield 2-succinyl-5-enolpyruvyl-6-hydroxy-3-cyclohexene-1-carboxylate (SEPHCHC). This chain is 2-succinyl-5-enolpyruvyl-6-hydroxy-3-cyclohexene-1-carboxylate synthase, found in Citrobacter koseri (strain ATCC BAA-895 / CDC 4225-83 / SGSC4696).